The following is a 406-amino-acid chain: Argininosuccinate synthase (406 aa).

ATP is bound by residues 11–19 (AYSGGLDTS) and A38. L-citrulline-binding residues include Y91 and S96. G121 lines the ATP pocket. L-aspartate is bound by residues T123, N127, and D128. N127 contributes to the L-citrulline binding site. L-citrulline is bound by residues R131, S181, S190, E266, and Y278.

This sequence belongs to the argininosuccinate synthase family. Type 1 subfamily. As to quaternary structure, homotetramer.

It is found in the cytoplasm. It catalyses the reaction L-citrulline + L-aspartate + ATP = 2-(N(omega)-L-arginino)succinate + AMP + diphosphate + H(+). It participates in amino-acid biosynthesis; L-arginine biosynthesis; L-arginine from L-ornithine and carbamoyl phosphate: step 2/3. This chain is Argininosuccinate synthase, found in Campylobacter lari (strain RM2100 / D67 / ATCC BAA-1060).